The sequence spans 189 residues: Peptide deformylase (189 aa).

Fe cation contacts are provided by cysteine 93 and histidine 135. Glutamate 136 is an active-site residue. Residue histidine 139 participates in Fe cation binding.

It belongs to the polypeptide deformylase family. The cofactor is Fe(2+).

The catalysed reaction is N-terminal N-formyl-L-methionyl-[peptide] + H2O = N-terminal L-methionyl-[peptide] + formate. In terms of biological role, removes the formyl group from the N-terminal Met of newly synthesized proteins. Requires at least a dipeptide for an efficient rate of reaction. N-terminal L-methionine is a prerequisite for activity but the enzyme has broad specificity at other positions. The protein is Peptide deformylase of Karelsulcia muelleri (strain GWSS) (Sulcia muelleri).